The chain runs to 227 residues: Cytochrome c oxidase subunit 2 (227 aa).

Residues 1–14 are Mitochondrial intermembrane-facing; sequence MAYPFQLGLQDATS. Residues 15-45 form a helical membrane-spanning segment; it reads PIMEELANFHDHTLMIVFLISSLVLYIISSM. Topologically, residues 46–59 are mitochondrial matrix; sequence LTTKLTHTSTMDAQ. A helical membrane pass occupies residues 60 to 87; that stretch reads EVETIWTILPAVILILIALPSLRILYMM. Residues 88-227 lie on the Mitochondrial intermembrane side of the membrane; the sequence is DEINNPALTV…HFENWSASMI (140 aa). The Cu cation site is built by histidine 161, cysteine 196, glutamate 198, cysteine 200, histidine 204, and methionine 207. Glutamate 198 serves as a coordination point for Mg(2+).

This sequence belongs to the cytochrome c oxidase subunit 2 family. As to quaternary structure, component of the cytochrome c oxidase (complex IV, CIV), a multisubunit enzyme composed of 14 subunits. The complex is composed of a catalytic core of 3 subunits MT-CO1, MT-CO2 and MT-CO3, encoded in the mitochondrial DNA, and 11 supernumerary subunits COX4I, COX5A, COX5B, COX6A, COX6B, COX6C, COX7A, COX7B, COX7C, COX8 and NDUFA4, which are encoded in the nuclear genome. The complex exists as a monomer or a dimer and forms supercomplexes (SCs) in the inner mitochondrial membrane with NADH-ubiquinone oxidoreductase (complex I, CI) and ubiquinol-cytochrome c oxidoreductase (cytochrome b-c1 complex, complex III, CIII), resulting in different assemblies (supercomplex SCI(1)III(2)IV(1) and megacomplex MCI(2)III(2)IV(2)). Found in a complex with TMEM177, COA6, COX18, COX20, SCO1 and SCO2. Interacts with TMEM177 in a COX20-dependent manner. Interacts with COX20. Interacts with COX16. Cu cation is required as a cofactor.

It is found in the mitochondrion inner membrane. It catalyses the reaction 4 Fe(II)-[cytochrome c] + O2 + 8 H(+)(in) = 4 Fe(III)-[cytochrome c] + 2 H2O + 4 H(+)(out). Its function is as follows. Component of the cytochrome c oxidase, the last enzyme in the mitochondrial electron transport chain which drives oxidative phosphorylation. The respiratory chain contains 3 multisubunit complexes succinate dehydrogenase (complex II, CII), ubiquinol-cytochrome c oxidoreductase (cytochrome b-c1 complex, complex III, CIII) and cytochrome c oxidase (complex IV, CIV), that cooperate to transfer electrons derived from NADH and succinate to molecular oxygen, creating an electrochemical gradient over the inner membrane that drives transmembrane transport and the ATP synthase. Cytochrome c oxidase is the component of the respiratory chain that catalyzes the reduction of oxygen to water. Electrons originating from reduced cytochrome c in the intermembrane space (IMS) are transferred via the dinuclear copper A center (CU(A)) of subunit 2 and heme A of subunit 1 to the active site in subunit 1, a binuclear center (BNC) formed by heme A3 and copper B (CU(B)). The BNC reduces molecular oxygen to 2 water molecules using 4 electrons from cytochrome c in the IMS and 4 protons from the mitochondrial matrix. This Malacomys longipes (Big-eared swamp rat) protein is Cytochrome c oxidase subunit 2 (MT-CO2).